A 142-amino-acid polypeptide reads, in one-letter code: Large ribosomal subunit protein uL13 (142 aa).

This sequence belongs to the universal ribosomal protein uL13 family. Part of the 50S ribosomal subunit.

Its function is as follows. This protein is one of the early assembly proteins of the 50S ribosomal subunit, although it is not seen to bind rRNA by itself. It is important during the early stages of 50S assembly. This Actinobacillus succinogenes (strain ATCC 55618 / DSM 22257 / CCUG 43843 / 130Z) protein is Large ribosomal subunit protein uL13.